The primary structure comprises 365 residues: Putative glutamate--cysteine ligase 2-2 (365 aa).

It belongs to the glutamate--cysteine ligase type 2 family. YbdK subfamily.

It catalyses the reaction L-cysteine + L-glutamate + ATP = gamma-L-glutamyl-L-cysteine + ADP + phosphate + H(+). Functionally, ATP-dependent carboxylate-amine ligase which exhibits weak glutamate--cysteine ligase activity. This is Putative glutamate--cysteine ligase 2-2 from Mycolicibacterium vanbaalenii (strain DSM 7251 / JCM 13017 / BCRC 16820 / KCTC 9966 / NRRL B-24157 / PYR-1) (Mycobacterium vanbaalenii).